Here is a 696-residue protein sequence, read N- to C-terminus: Spermatogenesis-associated protein 21 (696 aa).

Disordered stretches follow at residues 1–301 and 329–386; these read MDNR…AAGT and LKAR…SVPT. Over residues 67–86 the composition is skewed to basic and acidic residues; the sequence is KGPRYRDTFKEGPSELRTQE. Residues 96–116 are compositionally biased toward polar residues; sequence KQSSWVPQEGSQELQAGQDQS. A compositionally biased stretch (basic and acidic residues) spans 195–209; sequence GDKRPKEADVPHIRP. Polar residues predominate over residues 223-235; it reads DSSQEAMPPTSTV. Positions 275 to 287 are enriched in basic and acidic residues; the sequence is EVRDIGERREPDR. Composition is skewed to low complexity over residues 288–297 and 339–366; these read VQQQPQKPVV and SPRTLTPVPTSSPSLPQTPASAPASGPS. The stretch at 424–451 forms a coiled coil; it reads EPEEQSLQKLYQNREKSEEQLTLKQEEA. The EF-hand domain maps to 481-516; sequence VTPAQVEDALMSADVNGDGHVDFKDFLAVMTDTRRF. Ca(2+) contacts are provided by Asp494, Asn496, Asp498, His500, and Asp505. A disordered region spans residues 646-696; it reads KPTNHYVQDQCTTPGLAPDIRSPFFQSRSQGNREHNSDSRKWPSSVPSRTH. The span at 676–686 shows a compositional bias: basic and acidic residues; it reads GNREHNSDSRK.

In terms of biological role, involved in the differentiation of haploid spermatids. This chain is Spermatogenesis-associated protein 21 (SPATA21), found in Macaca fascicularis (Crab-eating macaque).